An 829-amino-acid polypeptide reads, in one-letter code: Protein roadkill (829 aa).

3 stretches are compositionally biased toward low complexity: residues 24–36, 122–140, and 266–288; these read EQQQHHLQQQQQQ, TPAATATPPQQQQQQQAAP, and SSSSSSSASASSSSVAASSSSSS. Disordered regions lie at residues 24 to 47, 106 to 142, 266 to 296, and 313 to 400; these read EQQQHHLQQQQQQPATSDNCCCEN, SSLQQQQHQQQQHHPHTPAATATPPQQQQQQQAAPSV, SSSSSSSASASSSSVAASSSSSSHHLHSHHS, and HLNQ…NQQQ. The span at 313–322 shows a compositional bias: basic residues; it reads HLNQQQHHHP. Low complexity-rich tracts occupy residues 323–353, 372–382, and 389–400; these read LSASSSSASASPSASTSSSSSYQQSSVQQQH, SSSSSSSSSSS, and SSSSSNSNNQQQ. The 131-residue stretch at 486–616 folds into the MATH domain; the sequence is KFSYMWTINN…EDKLTIFCEV (131 aa). Residues 655–722 enclose the BTB domain; it reads SDVTLSVGGR…IYTGKAPNLE (68 aa).

This sequence belongs to the Tdpoz family. Interacts with ci and gft/CUL3. In terms of tissue distribution, expressed near the anterio-posterior compartment boundary of antenna, leg and wing disks.

The protein localises to the nucleus. Its pathway is protein modification; protein ubiquitination. Involved in segment polarity. In complex with gft/CUL3, promotes ubiquitination of ci and its subsequent degradation by the proteasome, which results in hh signaling attenuation. This regulation may be important during eye formation for proper packing of ommatidia into a hexagonal array. In Drosophila melanogaster (Fruit fly), this protein is Protein roadkill (rdx).